The primary structure comprises 185 residues: MIILGIDEAGRGPLSGPVVAAGVILDQDKIIDGLADSKKLTEKKRQSLYQQIITHAKAYTIVEISPQQIDELNILQATLKAMHQVANNLERQFDKVLVDGNKLPNWDYNSEAIVKGDSKIIEISAASILAKVHRDNICLEHDRLYPQYGFAKHKGYPTKEHLENIKKYGVLDIHRKSYKPIQLLL.

The 185-residue stretch at 1–185 (MIILGIDEAG…KSYKPIQLLL (185 aa)) folds into the RNase H type-2 domain. Residues Asp-7, Glu-8, and Asp-99 each coordinate a divalent metal cation.

Belongs to the RNase HII family. Mn(2+) is required as a cofactor. Mg(2+) serves as cofactor.

The protein resides in the cytoplasm. The enzyme catalyses Endonucleolytic cleavage to 5'-phosphomonoester.. Functionally, endonuclease that specifically degrades the RNA of RNA-DNA hybrids. The protein is Ribonuclease HII of Francisella tularensis subsp. novicida (strain U112).